The primary structure comprises 510 residues: ATP synthase subunit alpha (510 aa).

Gly169–Thr176 lines the ATP pocket.

The protein belongs to the ATPase alpha/beta chains family. As to quaternary structure, F-type ATPases have 2 components, CF(1) - the catalytic core - and CF(0) - the membrane proton channel. CF(1) has five subunits: alpha(3), beta(3), gamma(1), delta(1), epsilon(1). CF(0) has three main subunits: a(1), b(2) and c(9-12). The alpha and beta chains form an alternating ring which encloses part of the gamma chain. CF(1) is attached to CF(0) by a central stalk formed by the gamma and epsilon chains, while a peripheral stalk is formed by the delta and b chains.

Its subcellular location is the cell inner membrane. It carries out the reaction ATP + H2O + 4 H(+)(in) = ADP + phosphate + 5 H(+)(out). Its function is as follows. Produces ATP from ADP in the presence of a proton gradient across the membrane. The alpha chain is a regulatory subunit. The polypeptide is ATP synthase subunit alpha (Anaeromyxobacter dehalogenans (strain 2CP-1 / ATCC BAA-258)).